We begin with the raw amino-acid sequence, 311 residues long: Delta(1)-pyrroline-2-carboxylate reductase 2 (311 aa).

This sequence belongs to the ornithine cyclodeaminase/mu-crystallin family.

It carries out the reaction L-proline + NAD(+) = 1-pyrroline-2-carboxylate + NADH + H(+). It catalyses the reaction L-proline + NADP(+) = 1-pyrroline-2-carboxylate + NADPH + H(+). Functionally, catalyzes the reduction of Delta(1)-pyrroline-2-carboxylate (Pyr2C) to L-proline, using preferentially NADPH over NADH as the electron donor. May be involved in a degradation pathway that converts trans-3-hydroxy-L-proline (t3LHyp) to L-proline. This Burkholderia ambifaria (strain ATCC BAA-244 / DSM 16087 / CCUG 44356 / LMG 19182 / AMMD) (Burkholderia cepacia (strain AMMD)) protein is Delta(1)-pyrroline-2-carboxylate reductase 2.